We begin with the raw amino-acid sequence, 192 residues long: UPF0312 protein Spro_1887 (192 aa).

An N-terminal signal peptide occupies residues 1 to 23 (MLKKTVLGLTAGAMLLSAGSALA).

This sequence belongs to the UPF0312 family. Type 1 subfamily.

It is found in the periplasm. This is UPF0312 protein Spro_1887 from Serratia proteamaculans (strain 568).